Reading from the N-terminus, the 405-residue chain is Elongation factor Tu (405 aa).

One can recognise a tr-type G domain in the interval 10–213 (KEHVNVGTIG…AMDEYIPTPE (204 aa)). Residues 19-26 (GHVDHGKS) form a G1 region. 19–26 (GHVDHGKS) serves as a coordination point for GTP. Ser26 lines the Mg(2+) pocket. The tract at residues 64–68 (GITIN) is G2. The segment at 85 to 88 (DCPG) is G3. GTP-binding positions include 85–89 (DCPGH) and 140–143 (NKCD). The segment at 140-143 (NKCD) is G4. Residues 178–180 (SAL) form a G5 region.

Belongs to the TRAFAC class translation factor GTPase superfamily. Classic translation factor GTPase family. EF-Tu/EF-1A subfamily. Monomer.

The protein localises to the cytoplasm. It carries out the reaction GTP + H2O = GDP + phosphate + H(+). GTP hydrolase that promotes the GTP-dependent binding of aminoacyl-tRNA to the A-site of ribosomes during protein biosynthesis. The sequence is that of Elongation factor Tu from Aquifex pyrophilus.